A 196-amino-acid polypeptide reads, in one-letter code: MQERIKACFTESIQTQIAAAEALPDAISRAAMTLVQSLLNGNKILCCGNGTSAANAQHFAASMINRFETERPSLPAIALNTDNVVLTAIANDRLHDEVYAKQVRALGHAGDVLLAISTRGNSRDIVKAVEAAVTRDMTIVALTGYDGGELAGLLGPQDVEIRIPSHRSARIQEMHMLTVNCLCDLIDNTLFPHQDD.

An SIS domain is found at 34–196; the sequence is LVQSLLNGNK…DNTLFPHQDD (163 aa).

Belongs to the SIS family. DiaA subfamily. In terms of assembly, homotetramer; dimer of dimers.

Functionally, required for the timely initiation of chromosomal replication via direct interactions with the DnaA initiator protein. In Shigella boydii serotype 18 (strain CDC 3083-94 / BS512), this protein is DnaA initiator-associating protein DiaA.